Reading from the N-terminus, the 146-residue chain is Large ribosomal subunit protein uL15 (146 aa).

The tract at residues 1 to 57 (MKLHELKPAQGSRKTRNRVGRGSSSGNGKTAGRGQKGQKARSGGNIRSGFEGGQTPL) is disordered. Over residues 23–35 (SSSGNGKTAGRGQ) the composition is skewed to gly residues.

The protein belongs to the universal ribosomal protein uL15 family. As to quaternary structure, part of the 50S ribosomal subunit.

In terms of biological role, binds to the 23S rRNA. In Streptococcus mutans serotype c (strain ATCC 700610 / UA159), this protein is Large ribosomal subunit protein uL15.